Reading from the N-terminus, the 366-residue chain is Probable cyclin-dependent kinase 10 (366 aa).

The 287-residue stretch at 7 to 293 (FEKLDSIGEG…ASDAIKHPFF (287 aa)) folds into the Protein kinase domain. Residues 13–21 (IGEGTYGIV) and Lys-36 each bind ATP. Asp-132 (proton acceptor) is an active-site residue. Low complexity predominate over residues 315–358 (FKNQNKKQNNNFNNFVQNNQTNQNNQTNQNNQTNQNNKTSQNNN). Positions 315-366 (FKNQNKKQNNNFNNFVQNNQTNQNNQTNQNNQTNQNNKTSQNNNMDSYKYSK) are disordered.

It belongs to the protein kinase superfamily. CMGC Ser/Thr protein kinase family. CDC2/CDKX subfamily.

It catalyses the reaction L-seryl-[protein] + ATP = O-phospho-L-seryl-[protein] + ADP + H(+). It carries out the reaction L-threonyl-[protein] + ATP = O-phospho-L-threonyl-[protein] + ADP + H(+). This is Probable cyclin-dependent kinase 10 (cdk10) from Dictyostelium discoideum (Social amoeba).